The following is a 348-amino-acid chain: Uroporphyrinogen decarboxylase (348 aa).

Substrate is bound by residues 27 to 31, phenylalanine 46, aspartate 76, tyrosine 152, serine 207, and histidine 320; that span reads RQAGR.

Belongs to the uroporphyrinogen decarboxylase family. As to quaternary structure, homodimer.

The protein resides in the cytoplasm. It catalyses the reaction uroporphyrinogen III + 4 H(+) = coproporphyrinogen III + 4 CO2. It functions in the pathway porphyrin-containing compound metabolism; protoporphyrin-IX biosynthesis; coproporphyrinogen-III from 5-aminolevulinate: step 4/4. Functionally, catalyzes the decarboxylation of four acetate groups of uroporphyrinogen-III to yield coproporphyrinogen-III. The polypeptide is Uroporphyrinogen decarboxylase (Bacillus anthracis).